The chain runs to 655 residues: FYVE, RhoGEF and PH domain-containing protein 2 (655 aa).

Ser10, Ser39, and Ser47 each carry phosphoserine. Disordered stretches follow at residues 21-52 and 84-103; these read NRTP…EPWE and WRRS…EPEE. The span at 32-41 shows a compositional bias: basic and acidic residues; the sequence is SLEDQPHSPE. Residues 102 to 290 enclose the DH domain; that stretch reads EEKRVVRELL…FSAAQHSNAA (189 aa). One can recognise a PH 1 domain in the interval 319–418; that stretch reads TLLREGPVLK…WMQACQAAID (100 aa). The FYVE-type zinc finger occupies 458 to 518; that stretch reads DKMVTMCMRC…VCLTCYTFLT (61 aa). Positions 464, 467, 481, 484, 489, 492, 510, and 513 each coordinate Zn(2+). Positions 544–641 constitute a PH 2 domain; that stretch reads QSLVCSFLQL…WVTAIKRAAS (98 aa). A Phosphothreonine modification is found at Thr644. Ser654 is modified (phosphoserine).

In terms of tissue distribution, lymph node, spleen, B-lymphocytes and macrophages (at protein level). Expressed at high levels in lymph node, spleen, B-lymphocytes and bone marrow macrophages. Expressed at lower levels in mature bone marrow dendritic cells. In both immature and mature B-cells, expression is down-regulated by prior B-cell receptor signaling. Expression remains high in resting B and memory cells but declines upon differentiation into plasma cells.

The protein resides in the cytoplasm. The protein localises to the nucleus. It localises to the early endosome. It is found in the early endosome membrane. Its subcellular location is the cell projection. The protein resides in the ruffle membrane. The protein localises to the cytoskeleton. Its function is as follows. Activates CDC42, a member of the Ras-like family of Rho- and Rac proteins, by exchanging bound GDP for free GTP. Activates JNK1 via CDC42 but not RAC1. Binds to phosphatidylinositol 4,5-bisphosphate, phosphatidylinositol 3,4,5-trisphosphate, phosphatidylinositol 5-monophosphate, phosphatidylinositol 4-monophosphate and phosphatidylinositol 3-monophosphate. The chain is FYVE, RhoGEF and PH domain-containing protein 2 (Fgd2) from Mus musculus (Mouse).